Here is a 941-residue protein sequence, read N- to C-terminus: MutS protein homolog 1 (941 aa).

G747–S754 lines the ATP pocket.

It belongs to the DNA mismatch repair MutS family.

The protein localises to the cytoplasm. It localises to the mitochondrion. Involved in mitochondrial DNA repair. The chain is MutS protein homolog 1 (msh1) from Schizosaccharomyces pombe (strain 972 / ATCC 24843) (Fission yeast).